Reading from the N-terminus, the 205-residue chain is Non-specific lipid transfer protein GPI-anchored 21 (205 aa).

Residues 1–27 (MNSNSFLISAALIFSLLSSNSPTSILA) form the signal peptide. 4 disulfides stabilise this stretch: Cys33/Cys75, Cys44/Cys59, Cys60/Cys100, and Cys73/Cys109. N-linked (GlcNAc...) asparagine glycosylation occurs at Asn89. The disordered stretch occupies residues 116 to 182 (LPTPGPASFG…FAPPPPSSSP (67 aa)). Residues 126–156 (PTTSPTDSQTSDPEGSASFRPPTSPTTSQTP) are compositionally biased toward low complexity. A lipid anchor (GPI-anchor amidated serine) is attached at Ser179. The propeptide at 180–205 (SSPSSSHSLKLSYLLFAFAFTIIKFI) is removed in mature form.

It belongs to the plant LTP family.

It localises to the cell membrane. Its function is as follows. Probable lipid transfer protein. The polypeptide is Non-specific lipid transfer protein GPI-anchored 21 (Arabidopsis thaliana (Mouse-ear cress)).